The following is a 173-amino-acid chain: Disulfide bond formation protein B (173 aa).

Over 1-14 (MIEFLRRIAAHRLA) the chain is Cytoplasmic. A helical transmembrane segment spans residues 15–31 (WSLLAASALFLELSALF). Residues 32 to 49 (FQHVLGLHPCVMCVYERI) are Periplasmic-facing. A disulfide bridge connects residues C41 and C44. Residues 50–65 (ATLGVLTAGLLGMVAP) form a helical membrane-spanning segment. The Cytoplasmic segment spans residues 66 to 72 (QKWYVRW). The helical transmembrane segment at 73–90 (SALLLWGSSAFWGLKLAL) threads the bilayer. At 91–145 (KHVDYQVNPSPFNVCEGFVDFPSWAPLDQWIPWMFYPDGDCSEVTWQFLSFSMPQ) the chain is on the periplasmic side. C105 and C131 are oxidised to a cystine. Residues 146–164 (WLVAIFAVYLLVFVVVAIG) traverse the membrane as a helical segment. Over 165–173 (NLVKGRCCS) the chain is Cytoplasmic.

The protein belongs to the DsbB family.

The protein resides in the cell inner membrane. Its function is as follows. Required for disulfide bond formation in some periplasmic proteins. Acts by oxidizing the DsbA protein. The chain is Disulfide bond formation protein B from Aeromonas hydrophila subsp. hydrophila (strain ATCC 7966 / DSM 30187 / BCRC 13018 / CCUG 14551 / JCM 1027 / KCTC 2358 / NCIMB 9240 / NCTC 8049).